Reading from the N-terminus, the 335-residue chain is Glycerol-3-phosphate dehydrogenase [NAD(P)+] (335 aa).

NADPH-binding residues include serine 10, phenylalanine 11, arginine 31, and lysine 105. Residues lysine 105, glycine 136, and serine 138 each contribute to the sn-glycerol 3-phosphate site. Alanine 140 is a binding site for NADPH. Sn-glycerol 3-phosphate is bound by residues lysine 191, aspartate 244, serine 254, arginine 255, and asparagine 256. The active-site Proton acceptor is lysine 191. Residue arginine 255 participates in NADPH binding. 2 residues coordinate NADPH: valine 279 and glutamate 281.

This sequence belongs to the NAD-dependent glycerol-3-phosphate dehydrogenase family.

The protein localises to the cytoplasm. It carries out the reaction sn-glycerol 3-phosphate + NAD(+) = dihydroxyacetone phosphate + NADH + H(+). It catalyses the reaction sn-glycerol 3-phosphate + NADP(+) = dihydroxyacetone phosphate + NADPH + H(+). It participates in membrane lipid metabolism; glycerophospholipid metabolism. Its function is as follows. Catalyzes the reduction of the glycolytic intermediate dihydroxyacetone phosphate (DHAP) to sn-glycerol 3-phosphate (G3P), the key precursor for phospholipid synthesis. The sequence is that of Glycerol-3-phosphate dehydrogenase [NAD(P)+] from Leptospira borgpetersenii serovar Hardjo-bovis (strain L550).